The following is a 221-amino-acid chain: uncharacterized protein (221 aa).

The next 4 membrane-spanning stretches (helical) occupy residues phenylalanine 30–alanine 50, alanine 62–isoleucine 82, valine 144–tyrosine 164, and isoleucine 179–leucine 199.

This sequence belongs to the DedA family.

The protein localises to the cell membrane. This is an uncharacterized protein from Bacillus subtilis (strain 168).